Here is a 220-residue protein sequence, read N- to C-terminus: Deoxyribose-phosphate aldolase 2 (220 aa).

Catalysis depends on Asp89, which acts as the Proton donor/acceptor. Lys151 functions as the Schiff-base intermediate with acetaldehyde in the catalytic mechanism. Lys180 acts as the Proton donor/acceptor in catalysis.

The protein belongs to the DeoC/FbaB aldolase family. DeoC type 1 subfamily.

It is found in the cytoplasm. The enzyme catalyses 2-deoxy-D-ribose 5-phosphate = D-glyceraldehyde 3-phosphate + acetaldehyde. Its pathway is carbohydrate degradation; 2-deoxy-D-ribose 1-phosphate degradation; D-glyceraldehyde 3-phosphate and acetaldehyde from 2-deoxy-alpha-D-ribose 1-phosphate: step 2/2. Its function is as follows. Catalyzes a reversible aldol reaction between acetaldehyde and D-glyceraldehyde 3-phosphate to generate 2-deoxy-D-ribose 5-phosphate. The protein is Deoxyribose-phosphate aldolase 2 of Staphylococcus aureus (strain MRSA252).